A 214-amino-acid polypeptide reads, in one-letter code: GTP-binding nuclear protein GSP1/Ran (214 aa).

The 165-residue stretch at Glu4 to Asn168 folds into the Small GTPase Ran-type domain. Asp15–Thr22 lines the GTP pocket. Residues Lys34–Val42 form a switch-I region. GTP-binding positions include Gly65, Asn119 to Asp122, and Ser147 to Lys149. The switch-II stretch occupies residues Gly65 to Gln81.

It belongs to the small GTPase superfamily. Ran family. In terms of assembly, found in a nuclear export complex with RanGTP, exportin and pre-miRNA.

Its subcellular location is the nucleus. In terms of biological role, GTP-binding protein involved in nucleocytoplasmic transport. Required for the import of protein into the nucleus and also for RNA export. Involved in chromatin condensation and control of cell cycle. The polypeptide is GTP-binding nuclear protein GSP1/Ran (GSP1) (Candida glabrata (strain ATCC 2001 / BCRC 20586 / JCM 3761 / NBRC 0622 / NRRL Y-65 / CBS 138) (Yeast)).